We begin with the raw amino-acid sequence, 92 residues long: Small ribosomal subunit protein uS19 (92 aa).

Belongs to the universal ribosomal protein uS19 family.

Its function is as follows. Protein S19 forms a complex with S13 that binds strongly to the 16S ribosomal RNA. The sequence is that of Small ribosomal subunit protein uS19 from Streptococcus thermophilus (strain ATCC BAA-491 / LMD-9).